Reading from the N-terminus, the 381-residue chain is L-lactate dehydrogenase (381 aa).

The region spanning 1 to 380 is the FMN hydroxy acid dehydrogenase domain; sequence MIISSASDYR…KPEALVDLSK (380 aa). Y24 provides a ligand contact to substrate. The FMN site is built by S106 and Q127. Residue Y129 participates in substrate binding. T155 serves as a coordination point for FMN. R164 contacts substrate. Residue K251 coordinates FMN. The active-site Proton acceptor is the H275. R278 contributes to the substrate binding site. 306 to 330 lines the FMN pocket; that stretch reads DSGIRNGLDIVRMLALGADATMLGR.

Belongs to the FMN-dependent alpha-hydroxy acid dehydrogenase family. It depends on FMN as a cofactor.

Its subcellular location is the cell inner membrane. It catalyses the reaction (S)-lactate + A = pyruvate + AH2. In terms of biological role, catalyzes the conversion of L-lactate to pyruvate. Is coupled to the respiratory chain. In Haemophilus influenzae (strain ATCC 51907 / DSM 11121 / KW20 / Rd), this protein is L-lactate dehydrogenase.